A 495-amino-acid polypeptide reads, in one-letter code: Telomere-binding protein subunit alpha (495 aa).

Positions 1 to 13 are enriched in polar residues; the sequence is MSTAAKQNRSTSR. The tract at residues 1-31 is disordered; sequence MSTAAKQNRSTSRVSKKKTAAPKEGAAKKSD.

This sequence belongs to the telombin family. In terms of assembly, heterodimer of an alpha and a beta subunit.

The protein resides in the nucleus. Its subcellular location is the chromosome. It is found in the telomere. Its function is as follows. May function as protective capping of the single-stranded telomeric overhang. May also participate in telomere length regulation during DNA replication. Binds specifically to the T4G4-containing extension on the 3'strand and protects this region of the telomere from nuclease digestion and chemical modification. The protein is Telomere-binding protein subunit alpha (MAC-56A) of Sterkiella nova (Ciliate).